Reading from the N-terminus, the 198-residue chain is Recombination protein RecR (198 aa).

Residues 59–74 (CSLCCNYTDHDPCPIC) form a C4-type zinc finger. A Toprim domain is found at 82-175 (TLLCIVEQPR…KVTRIAHGLP (94 aa)).

It belongs to the RecR family.

Functionally, may play a role in DNA repair. It seems to be involved in an RecBC-independent recombinational process of DNA repair. It may act with RecF and RecO. This Desulfitobacterium hafniense (strain Y51) protein is Recombination protein RecR.